Reading from the N-terminus, the 152-residue chain is MAATEDTLYALIDPLLTGMGYELVGIEYGGPAGKRLLRIYIDSPDGITLDDCETCSRQISAVLDVEDPIPGEYTLEISSPGLDRPIFKASDYDRFAGEQIKIRLSAPWEGRRRFKGVLAGLGDEGVRVVEAQGDEVQIPLDLIEKARLILEP.

The protein belongs to the RimP family.

The protein resides in the cytoplasm. Its function is as follows. Required for maturation of 30S ribosomal subunits. The sequence is that of Ribosome maturation factor RimP from Alkalilimnicola ehrlichii (strain ATCC BAA-1101 / DSM 17681 / MLHE-1).